The following is a 313-amino-acid chain: tRNA-cytidine(32) 2-sulfurtransferase (313 aa).

Residues 46–51 (SGGKDS) carry the PP-loop motif motif. [4Fe-4S] cluster-binding residues include Cys121, Cys124, and Cys212.

Belongs to the TtcA family. In terms of assembly, homodimer. Mg(2+) serves as cofactor. The cofactor is [4Fe-4S] cluster.

The protein localises to the cytoplasm. It catalyses the reaction cytidine(32) in tRNA + S-sulfanyl-L-cysteinyl-[cysteine desulfurase] + AH2 + ATP = 2-thiocytidine(32) in tRNA + L-cysteinyl-[cysteine desulfurase] + A + AMP + diphosphate + H(+). It functions in the pathway tRNA modification. Functionally, catalyzes the ATP-dependent 2-thiolation of cytidine in position 32 of tRNA, to form 2-thiocytidine (s(2)C32). The sulfur atoms are provided by the cysteine/cysteine desulfurase (IscS) system. The sequence is that of tRNA-cytidine(32) 2-sulfurtransferase from Nitrosomonas eutropha (strain DSM 101675 / C91 / Nm57).